The sequence spans 409 residues: Glycosaminoglycan xylosylkinase (409 aa).

Over 1–6 (MKLKQR) the chain is Cytoplasmic. Residues 7 to 25 (VVLLAILLVIFIFTKVFLI) form a helical; Signal-anchor for type II membrane protein membrane-spanning segment. Over 26-409 (DNLDTSAANR…VEDRMPLSHL (384 aa)) the chain is Lumenal. Gln-107 and Lys-123 together coordinate ATP. Asp-142 lines the Mn(2+) pocket. The N-linked (GlcNAc...) asparagine glycan is linked to Asn-193. 2 cysteine pairs are disulfide-bonded: Cys-196-Cys-211 and Cys-201-Cys-204. Residue 222 to 225 (TLWL) participates in ATP binding. Intrachain disulfides connect Cys-257/Cys-331 and Cys-332/Cys-389. Residue Asp-289 is part of the active site. 2 residues coordinate ATP: Glu-294 and Asp-309. Asp-309 lines the Mn(2+) pocket.

This sequence belongs to the FAM20 family. The cofactor is Mn(2+). Widely expressed. Strongly expressed in pancreas, spleen and fetal liver.

Its subcellular location is the golgi apparatus membrane. It catalyses the reaction 3-O-(beta-D-galactosyl-(1-&gt;3)-beta-D-galactosyl-(1-&gt;4)-beta-D-xylosyl)-L-seryl-[protein] + ATP = 3-O-(beta-D-galactosyl-(1-&gt;3)-beta-D-galactosyl-(1-&gt;4)-beta-D-2-O-phosphoxylosyl)-L-seryl-[protein] + ADP + H(+). In terms of biological role, responsible for the 2-O-phosphorylation of xylose in the glycosaminoglycan-protein linkage region of proteoglycans thereby regulating the amount of mature GAG chains. Sulfated glycosaminoglycans (GAGs), including heparan sulfate and chondroitin sulfate, are synthesized on the so-called common GAG-protein linkage region (GlcUAbeta1-3Galbeta1-3Galbeta1-4Xylbeta1-O-Ser) of core proteins, which is formed by the stepwise addition of monosaccharide residues by the respective specific glycosyltransferases. Xylose 2-O-phosphorylation may influence the catalytic activity of B3GAT3 (GlcAT-I) which completes the precursor tetrasaccharide of GAG-protein linkage regions on which the repeating disaccharide region is synthesized. This chain is Glycosaminoglycan xylosylkinase, found in Homo sapiens (Human).